The sequence spans 147 residues: Large ribosomal subunit protein uL13 (147 aa).

Positions 126–147 (GGPEHPHAAQNPQPYEITQIAQ) are disordered.

The protein belongs to the universal ribosomal protein uL13 family. Part of the 50S ribosomal subunit.

Functionally, this protein is one of the early assembly proteins of the 50S ribosomal subunit, although it is not seen to bind rRNA by itself. It is important during the early stages of 50S assembly. This chain is Large ribosomal subunit protein uL13, found in Cutibacterium acnes (strain DSM 16379 / KPA171202) (Propionibacterium acnes).